The following is a 217-amino-acid chain: Pyridoxine/pyridoxamine 5'-phosphate oxidase (217 aa).

Residues 13 to 16 and Lys71 each bind substrate; that span reads RREY. FMN contacts are provided by residues 66 to 71, 81 to 82, Arg87, Lys88, and Gln110; these read RIVLLK and YT. Residues Tyr128, Arg132, and Ser136 each coordinate substrate. Residues 145–146 and Trp190 each bind FMN; that span reads QS. 196–198 contributes to the substrate binding site; sequence RLH. FMN is bound at residue Arg200.

Belongs to the pyridoxamine 5'-phosphate oxidase family. Homodimer. The cofactor is FMN.

The enzyme catalyses pyridoxamine 5'-phosphate + O2 + H2O = pyridoxal 5'-phosphate + H2O2 + NH4(+). It catalyses the reaction pyridoxine 5'-phosphate + O2 = pyridoxal 5'-phosphate + H2O2. It functions in the pathway cofactor metabolism; pyridoxal 5'-phosphate salvage; pyridoxal 5'-phosphate from pyridoxamine 5'-phosphate: step 1/1. It participates in cofactor metabolism; pyridoxal 5'-phosphate salvage; pyridoxal 5'-phosphate from pyridoxine 5'-phosphate: step 1/1. Catalyzes the oxidation of either pyridoxine 5'-phosphate (PNP) or pyridoxamine 5'-phosphate (PMP) into pyridoxal 5'-phosphate (PLP). The chain is Pyridoxine/pyridoxamine 5'-phosphate oxidase from Serratia proteamaculans (strain 568).